We begin with the raw amino-acid sequence, 453 residues long: Serine incorporator 1 (453 aa).

G2 carries N-myristoyl glycine lipidation. At 2–39 (GSVLGLCSMASWIPCLCGSAPCLLCRCCPSGNNSTVTR) the chain is on the cytoplasmic side. A helical membrane pass occupies residues 40 to 60 (LIYALFLLVGVCVACVMLIPG). The Lumenal segment spans residues 61-88 (MEEQLNKIPGFCENEKGMVPCNILVGYK). The helical transmembrane segment at 89 to 109 (AVYRLCFGLAMFYLLLSLLMI) threads the bilayer. Residues 110-123 (KVKSSSDPRAAIHN) are Cytoplasmic-facing. Residues 124–144 (GFWFFKFAAAIAIIIGAFFIP) traverse the membrane as a helical segment. The Lumenal portion of the chain corresponds to 145–151 (EGTFTTV). The chain crosses the membrane as a helical span at residues 152-172 (WFYVGMAGAFCFILIQLVLLI). Over 173-197 (DFAHSWNESWVEKMEEGNSRCWYAA) the chain is Cytoplasmic. The chain crosses the membrane as a helical span at residues 198 to 218 (LLSATALNYLLSLVAVVLFFV). At 219–231 (YYTHPASCAENKA) the chain is on the lumenal side. A helical membrane pass occupies residues 232 to 252 (FISVNMLLCLGASIMSILPKI). The Cytoplasmic segment spans residues 253 to 259 (QESQPRS). Residues 260-280 (GLLQSSVITVYTMYLTWSAMT) form a helical membrane-spanning segment. Topologically, residues 281–309 (NEPETECNPSLLNIIGYNTTSTVSKEGQS) are lumenal. A helical transmembrane segment spans residues 310–330 (VQWWHTQGIIGLILFLLCVFY). Over 331–387 (SSIRTSNNSQVNKLTLTSDESTLIEDGGARNDGSLEDGDDVHRAVDNERDGVTYSYS) the chain is Cytoplasmic. A Phosphoserine modification is found at S351. A Phosphothreonine modification is found at T352. S364 is subject to Phosphoserine. A helical transmembrane segment spans residues 388–408 (FFHFMLFLASLYIMMTLTNWY). Residues 409–426 (RYEPSREMKSQWTAVWVK) lie on the Lumenal side of the membrane. Residues 427–447 (ISSSWIGIVLYVWTLVAPLVL) traverse the membrane as a helical segment. Residues 448–453 (TNRDFD) are Cytoplasmic-facing.

This sequence belongs to the TDE1 family. In terms of assembly, interacts with SPTLC1.

It is found in the endoplasmic reticulum membrane. Its function is as follows. Enhances the incorporation of serine into phosphatidylserine and sphingolipids. The protein is Serine incorporator 1 (SERINC1) of Bos taurus (Bovine).